The primary structure comprises 190 residues: Molybdenum cofactor guanylyltransferase (190 aa).

GTP contacts are provided by residues 10–12 (LAG), Lys-23, Asn-51, Asp-69, and Asp-99. Position 99 (Asp-99) interacts with Mg(2+).

The protein belongs to the MobA family. As to quaternary structure, monomer. Requires Mg(2+) as cofactor.

Its subcellular location is the cytoplasm. It catalyses the reaction Mo-molybdopterin + GTP + H(+) = Mo-molybdopterin guanine dinucleotide + diphosphate. Its function is as follows. Transfers a GMP moiety from GTP to Mo-molybdopterin (Mo-MPT) cofactor (Moco or molybdenum cofactor) to form Mo-molybdopterin guanine dinucleotide (Mo-MGD) cofactor. The protein is Molybdenum cofactor guanylyltransferase of Mannheimia succiniciproducens (strain KCTC 0769BP / MBEL55E).